A 230-amino-acid polypeptide reads, in one-letter code: Probable methylthioribulose-1-phosphate dehydratase (230 aa).

Cys-87 is a binding site for substrate. Zn(2+) contacts are provided by His-105 and His-107. Residue Glu-129 is the Proton donor/acceptor of the active site. His-185 provides a ligand contact to Zn(2+).

Belongs to the aldolase class II family. MtnB subfamily. The cofactor is Zn(2+).

The protein resides in the cytoplasm. The enzyme catalyses 5-(methylsulfanyl)-D-ribulose 1-phosphate = 5-methylsulfanyl-2,3-dioxopentyl phosphate + H2O. Its pathway is amino-acid biosynthesis; L-methionine biosynthesis via salvage pathway; L-methionine from S-methyl-5-thio-alpha-D-ribose 1-phosphate: step 2/6. In terms of biological role, catalyzes the dehydration of methylthioribulose-1-phosphate (MTRu-1-P) into 2,3-diketo-5-methylthiopentyl-1-phosphate (DK-MTP-1-P). This chain is Probable methylthioribulose-1-phosphate dehydratase, found in Drosophila grimshawi (Hawaiian fruit fly).